A 264-amino-acid polypeptide reads, in one-letter code: TLC domain-containing protein 4-B (264 aa).

Transmembrane regions (helical) follow at residues 6–26 (VYVVAGSFVGFQLFFSCVSPV), 50–70 (LVSTVHALIVGLFCLYILWYD), 84–104 (LVKLNVAITCGYLFYDLLLLA), 110–130 (MGDVFFVCHHLAALYAYGYVL), 169–189 (LVVANGIAMAVVFFLVRIAVM), and 210–230 (LAIQVAWIISCVCLDILNIIW). In terms of domain architecture, TLC spans 41–243 (NKLNDWNSRL…IARGCYKVIT (203 aa)).

It belongs to the TLCD4 family.

The protein resides in the membrane. This Danio rerio (Zebrafish) protein is TLC domain-containing protein 4-B (tlcd4b).